The following is a 640-amino-acid chain: Biosynthetic arginine decarboxylase (640 aa).

An N6-(pyridoxal phosphate)lysine modification is found at Lys-105. Residue 290–300 coordinates substrate; it reads FDVGGGLAVDY.

This sequence belongs to the Orn/Lys/Arg decarboxylase class-II family. SpeA subfamily. Requires Mg(2+) as cofactor. Pyridoxal 5'-phosphate serves as cofactor.

It carries out the reaction L-arginine + H(+) = agmatine + CO2. Catalyzes the biosynthesis of agmatine from arginine. The polypeptide is Biosynthetic arginine decarboxylase (Vibrio cholerae serotype O1 (strain ATCC 39315 / El Tor Inaba N16961)).